Here is a 448-residue protein sequence, read N- to C-terminus: tRNA(Ile)-lysidine synthase (448 aa).

Residue 30–35 (GGGADS) coordinates ATP.

Belongs to the tRNA(Ile)-lysidine synthase family.

It localises to the cytoplasm. It carries out the reaction cytidine(34) in tRNA(Ile2) + L-lysine + ATP = lysidine(34) in tRNA(Ile2) + AMP + diphosphate + H(+). Ligates lysine onto the cytidine present at position 34 of the AUA codon-specific tRNA(Ile) that contains the anticodon CAU, in an ATP-dependent manner. Cytidine is converted to lysidine, thus changing the amino acid specificity of the tRNA from methionine to isoleucine. This chain is tRNA(Ile)-lysidine synthase, found in Idiomarina loihiensis (strain ATCC BAA-735 / DSM 15497 / L2-TR).